Consider the following 564-residue polypeptide: Bifunctional sesquiterpene synthase 1 (564 aa).

Mg(2+) contacts are provided by D317, D321, D461, and E469. Positions 317 to 321 (DDTFD) match the DDXXD motif motif.

It belongs to the terpene synthase family. Requires Mg(2+) as cofactor.

The catalysed reaction is (2E,6E)-farnesyl diphosphate = alpha-copaene + diphosphate. It catalyses the reaction (2E,6E)-farnesyl diphosphate = delta-cadinene + diphosphate. It functions in the pathway secondary metabolite biosynthesis; terpenoid biosynthesis. In terms of biological role, sesquiterpene synthase converting farnesyl diphosphate to alpha copaene and delta-cadinene as the major products. This is Bifunctional sesquiterpene synthase 1 from Phyla dulcis (Aztec sweet herb).